A 72-amino-acid chain; its full sequence is ATP synthase subunit c (72 aa).

Transmembrane regions (helical) follow at residues 4 to 24 and 46 to 66; these read ALGAGLAVSIAGIGGGIGMGI and LLFITLAFIETLTIYGLLIAF.

It belongs to the ATPase C chain family. In terms of assembly, F-type ATPases have 2 components, F(1) - the catalytic core - and F(0) - the membrane proton channel. F(1) has five subunits: alpha(3), beta(3), gamma(1), delta(1), epsilon(1). F(0) has three main subunits: a(1), b(2) and c(10-14). The alpha and beta chains form an alternating ring which encloses part of the gamma chain. F(1) is attached to F(0) by a central stalk formed by the gamma and epsilon chains, while a peripheral stalk is formed by the delta and b chains.

The protein localises to the cell membrane. Its function is as follows. F(1)F(0) ATP synthase produces ATP from ADP in the presence of a proton or sodium gradient. F-type ATPases consist of two structural domains, F(1) containing the extramembraneous catalytic core and F(0) containing the membrane proton channel, linked together by a central stalk and a peripheral stalk. During catalysis, ATP synthesis in the catalytic domain of F(1) is coupled via a rotary mechanism of the central stalk subunits to proton translocation. Key component of the F(0) channel; it plays a direct role in translocation across the membrane. A homomeric c-ring of between 10-14 subunits forms the central stalk rotor element with the F(1) delta and epsilon subunits. This Syntrophomonas wolfei subsp. wolfei (strain DSM 2245B / Goettingen) protein is ATP synthase subunit c.